The chain runs to 88 residues: Putative regulatory protein Ava_1474 (88 aa).

This sequence belongs to the RemA family.

The protein is Putative regulatory protein Ava_1474 of Trichormus variabilis (strain ATCC 29413 / PCC 7937) (Anabaena variabilis).